The sequence spans 359 residues: DNA replication and repair protein RecF (359 aa).

30–37 contributes to the ATP binding site; it reads GANGSGKT.

The protein belongs to the RecF family.

It is found in the cytoplasm. In terms of biological role, the RecF protein is involved in DNA metabolism; it is required for DNA replication and normal SOS inducibility. RecF binds preferentially to single-stranded, linear DNA. It also seems to bind ATP. The sequence is that of DNA replication and repair protein RecF from Vibrio atlanticus (strain LGP32) (Vibrio splendidus (strain Mel32)).